The sequence spans 289 residues: ATP phosphoribosyltransferase (289 aa).

It belongs to the ATP phosphoribosyltransferase family. Long subfamily. Mg(2+) is required as a cofactor.

The protein localises to the cytoplasm. It catalyses the reaction 1-(5-phospho-beta-D-ribosyl)-ATP + diphosphate = 5-phospho-alpha-D-ribose 1-diphosphate + ATP. The protein operates within amino-acid biosynthesis; L-histidine biosynthesis; L-histidine from 5-phospho-alpha-D-ribose 1-diphosphate: step 1/9. With respect to regulation, feedback inhibited by histidine. Functionally, catalyzes the condensation of ATP and 5-phosphoribose 1-diphosphate to form N'-(5'-phosphoribosyl)-ATP (PR-ATP). Has a crucial role in the pathway because the rate of histidine biosynthesis seems to be controlled primarily by regulation of HisG enzymatic activity. This Methanosarcina acetivorans (strain ATCC 35395 / DSM 2834 / JCM 12185 / C2A) protein is ATP phosphoribosyltransferase.